The chain runs to 352 residues: MVFRIASSPYTHNQRQTSRIMLLVLIAALPGIAAQTWFFGWGTLFQIVLAAITALVAEAIVLRLRKQSVASHLQDYSALLTGLLLAVSIPPLAPWWMVVLGTGFAIIIAKQLYGGLGQNPFNPAMIGYVVLLISFPVQMTSWLPPYEIAATTPDILDTLRMIFSGHTASGGDMTLLRIGIDGISQATPLDTFKTSLRAGHSVEQIMQYPIYSGALAGVGWQWVNLAWLVGGVFLLWQKAIRWHIPVSFLLTLALCAALGWLFSPATLASPQLHLLSGATMLGAFFILTDPVTASTTNRGRLIFGALAGVLVWLIRSFGGYPDGVAFAVLLANITVPLIDYYTRPRVYGHRKG.

4 consecutive transmembrane segments (helical) span residues 20-40 (IMLL…WFFG), 42-62 (GTLF…AIVL), 69-91 (VASH…SIPP), and 123-143 (PAMI…TSWL). FMN phosphoryl threonine is present on Thr187. Helical transmembrane passes span 215–235 (LAGV…VFLL), 242–262 (WHIP…GWLF), 267–287 (LASP…FFIL), 301–321 (LIFG…GGYP), and 322–342 (DGVA…DYYT).

The protein belongs to the NqrB/RnfD family. The complex is composed of six subunits: RsxA, RsxB, RsxC, RsxD, RsxE and RsxG. FMN is required as a cofactor.

The protein localises to the cell inner membrane. Functionally, part of a membrane-bound complex that couples electron transfer with translocation of ions across the membrane. Required to maintain the reduced state of SoxR. In Salmonella typhi, this protein is Ion-translocating oxidoreductase complex subunit D.